The chain runs to 355 residues: Uroporphyrinogen decarboxylase (355 aa).

Substrate contacts are provided by residues 27–31 (RQAGR), D77, Y154, T209, and H328.

Belongs to the uroporphyrinogen decarboxylase family. Homodimer.

The protein localises to the cytoplasm. It catalyses the reaction uroporphyrinogen III + 4 H(+) = coproporphyrinogen III + 4 CO2. The protein operates within porphyrin-containing compound metabolism; protoporphyrin-IX biosynthesis; coproporphyrinogen-III from 5-aminolevulinate: step 4/4. Catalyzes the decarboxylation of four acetate groups of uroporphyrinogen-III to yield coproporphyrinogen-III. In Colwellia psychrerythraea (strain 34H / ATCC BAA-681) (Vibrio psychroerythus), this protein is Uroporphyrinogen decarboxylase.